The sequence spans 505 residues: Cytochrome P450 2K6 (505 aa).

Residues 7-27 (FLLQGSPTGTILGALLLFLVI) form a helical membrane-spanning segment. C448 lines the heme pocket.

Belongs to the cytochrome P450 family. It depends on heme as a cofactor. Detected in liver and ovary.

It is found in the endoplasmic reticulum membrane. The protein localises to the microsome membrane. In terms of biological role, metabolizes aflatoxin B1 (AFB1) to the cytotoxic derivative AFB1 exo-8,9-epoxide. Does not show activity towards lauric acid. This is Cytochrome P450 2K6 from Danio rerio (Zebrafish).